Consider the following 202-residue polypeptide: ATP-dependent Clp protease proteolytic subunit (202 aa).

The Nucleophile role is filled by Ser-98. Residue His-123 is part of the active site.

The protein belongs to the peptidase S14 family. In terms of assembly, fourteen ClpP subunits assemble into 2 heptameric rings which stack back to back to give a disk-like structure with a central cavity, resembling the structure of eukaryotic proteasomes.

Its subcellular location is the cytoplasm. It carries out the reaction Hydrolysis of proteins to small peptides in the presence of ATP and magnesium. alpha-casein is the usual test substrate. In the absence of ATP, only oligopeptides shorter than five residues are hydrolyzed (such as succinyl-Leu-Tyr-|-NHMec, and Leu-Tyr-Leu-|-Tyr-Trp, in which cleavage of the -Tyr-|-Leu- and -Tyr-|-Trp bonds also occurs).. Functionally, cleaves peptides in various proteins in a process that requires ATP hydrolysis. Has a chymotrypsin-like activity. Plays a major role in the degradation of misfolded proteins. The sequence is that of ATP-dependent Clp protease proteolytic subunit from Solidesulfovibrio magneticus (strain ATCC 700980 / DSM 13731 / RS-1) (Desulfovibrio magneticus).